A 109-amino-acid chain; its full sequence is Small ribosomal subunit protein uS10 (109 aa).

This sequence belongs to the universal ribosomal protein uS10 family. As to quaternary structure, part of the 30S ribosomal subunit.

In terms of biological role, involved in the binding of tRNA to the ribosomes. In Koribacter versatilis (strain Ellin345), this protein is Small ribosomal subunit protein uS10.